We begin with the raw amino-acid sequence, 20 residues long: Pregnancy-associated glycoprotein 75 (20 aa).

It belongs to the peptidase A1 family. Post-translationally, N-glycosylated. In terms of tissue distribution, expressed in chorionic epithelium (trophectoderm).

It is found in the secreted. The chain is Pregnancy-associated glycoprotein 75 from Bubalus bubalis (Domestic water buffalo).